Reading from the N-terminus, the 448-residue chain is Glutamyl-tRNA reductase (448 aa).

Substrate-binding positions include 49 to 52 (TCNR), Ser-109, 114 to 116 (ETQ), and Gln-120. The active-site Nucleophile is Cys-50. 189–194 (GAGEMG) contributes to the NADP(+) binding site.

Belongs to the glutamyl-tRNA reductase family. In terms of assembly, homodimer.

It catalyses the reaction (S)-4-amino-5-oxopentanoate + tRNA(Glu) + NADP(+) = L-glutamyl-tRNA(Glu) + NADPH + H(+). It functions in the pathway porphyrin-containing compound metabolism; protoporphyrin-IX biosynthesis; 5-aminolevulinate from L-glutamyl-tRNA(Glu): step 1/2. In terms of biological role, catalyzes the NADPH-dependent reduction of glutamyl-tRNA(Glu) to glutamate 1-semialdehyde (GSA). This is Glutamyl-tRNA reductase from Staphylococcus epidermidis (strain ATCC 12228 / FDA PCI 1200).